Consider the following 603-residue polypeptide: NADH-ubiquinone oxidoreductase chain 5 (603 aa).

Transmembrane regions (helical) follow at residues 4-24, 38-58, 87-107, 122-142, 144-160, 171-191, 211-233, 241-261, 272-292, 301-320, 325-347, 370-390, 407-429, 457-477, 482-502, and 583-603; these read YTTM…TTLI, SIIA…MCLD, MTFI…SLWY, LIFL…QLFI, WEGV…WWYA, AILY…WFLL, TPLL…HPWL, TPVS…FLLI, LIQT…AICA, IVAF…IGIN, AFLH…GSII, STSL…TGFY, WALS…MILL, LTIG…PMST, IPLY…LTAL, and MIKL…LLIM.

This sequence belongs to the complex I subunit 5 family. In terms of assembly, core subunit of respiratory chain NADH dehydrogenase (Complex I) which is composed of 45 different subunits.

Its subcellular location is the mitochondrion inner membrane. It catalyses the reaction a ubiquinone + NADH + 5 H(+)(in) = a ubiquinol + NAD(+) + 4 H(+)(out). Its function is as follows. Core subunit of the mitochondrial membrane respiratory chain NADH dehydrogenase (Complex I) which catalyzes electron transfer from NADH through the respiratory chain, using ubiquinone as an electron acceptor. Essential for the catalytic activity and assembly of complex I. This chain is NADH-ubiquinone oxidoreductase chain 5 (MT-ND5), found in Pan paniscus (Pygmy chimpanzee).